Here is a 500-residue protein sequence, read N- to C-terminus: Probable cytosol aminopeptidase (500 aa).

K265 and D270 together coordinate Mn(2+). K277 is a catalytic residue. Mn(2+) contacts are provided by D288, D347, and E349. R351 is an active-site residue.

The protein belongs to the peptidase M17 family. Mn(2+) is required as a cofactor.

The protein resides in the cytoplasm. The enzyme catalyses Release of an N-terminal amino acid, Xaa-|-Yaa-, in which Xaa is preferably Leu, but may be other amino acids including Pro although not Arg or Lys, and Yaa may be Pro. Amino acid amides and methyl esters are also readily hydrolyzed, but rates on arylamides are exceedingly low.. It catalyses the reaction Release of an N-terminal amino acid, preferentially leucine, but not glutamic or aspartic acids.. In terms of biological role, presumably involved in the processing and regular turnover of intracellular proteins. Catalyzes the removal of unsubstituted N-terminal amino acids from various peptides. The chain is Probable cytosol aminopeptidase from Rickettsia typhi (strain ATCC VR-144 / Wilmington).